Consider the following 415-residue polypeptide: Phosphoglycerate kinase (415 aa).

Substrate is bound by residues 24-26 (DLN), Arg-39, 62-65 (HLGR), Arg-121, and Arg-161. Residues Lys-211, Gly-307, Glu-338, and 367–370 (GGDS) each bind ATP.

The protein belongs to the phosphoglycerate kinase family. In terms of assembly, monomer.

It localises to the cytoplasm. It carries out the reaction (2R)-3-phosphoglycerate + ATP = (2R)-3-phospho-glyceroyl phosphate + ADP. It functions in the pathway carbohydrate degradation; glycolysis; pyruvate from D-glyceraldehyde 3-phosphate: step 2/5. This is Phosphoglycerate kinase from Micrococcus luteus (strain ATCC 4698 / DSM 20030 / JCM 1464 / CCM 169 / CCUG 5858 / IAM 1056 / NBRC 3333 / NCIMB 9278 / NCTC 2665 / VKM Ac-2230) (Micrococcus lysodeikticus).